A 460-amino-acid chain; its full sequence is tRNA-2-methylthio-N(6)-dimethylallyladenosine synthase (460 aa).

One can recognise an MTTase N-terminal domain in the interval 10 to 126 (GSYWITTFGC…LEVLLNRVDS (117 aa)). Cys-19, Cys-55, Cys-89, Cys-161, Cys-165, and Cys-168 together coordinate [4Fe-4S] cluster. The Radical SAM core domain occupies 147-384 (RDSSICGWVN…NALVERCARE (238 aa)). In terms of domain architecture, TRAM spans 387–455 (ARYAGRTEEV…SFSLSGTPLP (69 aa)).

This sequence belongs to the methylthiotransferase family. MiaB subfamily. Monomer. [4Fe-4S] cluster is required as a cofactor.

The protein resides in the cytoplasm. It catalyses the reaction N(6)-dimethylallyladenosine(37) in tRNA + (sulfur carrier)-SH + AH2 + 2 S-adenosyl-L-methionine = 2-methylsulfanyl-N(6)-dimethylallyladenosine(37) in tRNA + (sulfur carrier)-H + 5'-deoxyadenosine + L-methionine + A + S-adenosyl-L-homocysteine + 2 H(+). Its function is as follows. Catalyzes the methylthiolation of N6-(dimethylallyl)adenosine (i(6)A), leading to the formation of 2-methylthio-N6-(dimethylallyl)adenosine (ms(2)i(6)A) at position 37 in tRNAs that read codons beginning with uridine. The sequence is that of tRNA-2-methylthio-N(6)-dimethylallyladenosine synthase from Parasynechococcus marenigrum (strain WH8102).